The following is a 644-amino-acid chain: MFQDNPLLAQLKQQLHSKTPRVEGVVKGTDKGFGFLEADGQKSYFIPPPHMKKVMHGDRITATLHTEKDREIVEPETLIEPFLTRFVGRIHKKDDRLSITPDHPLLKEAIPCRAARDVTDDFQEGDWAVAEMRRHPLKGDRGFHAELTQYITTGDDPLVPWWVTLSRHNLERSAPEVETTERHDGELVREDLTALNFVTIDSASTEDMDDALYVQDNGDGSLQLTIAIADPTAYVDAGSELDNIARQRAFTNYLPGFNIPMLPRALSDDICSLRPNERRPVLACRVTIAADGALGDDIHFFAASIESKAKLAYDNVSDWLENQGEWQPQNEEIAEQIRLLHRLCLARSEWRTTHALVFKDRPDYRFLLGEKGEVLDIVVEHRRIANRIVEESMIAANVCAAIVLRDKLGFGIYNVHNGFDPASIEQAVAVLDTHGVQADAQTLLTLDGFCTLRRELDAQPTQFLDSRIRRFQSFAEVSTTPGPHFGLGLEAYATWTSPIRKYGDMVNHRLLKAVITGQAAEKPQDDVTVQLAERRRLNRMAERDVGDWLYARYLKDKAGTDIRFNAEIIDVTRGGLRVRLLDNGAVVFIPSSFIHAVRDELVCSQEMGTLSVKGEVVYRQGDTLDVIIAEVRLETRGIVAKPAA.

An RNB domain is found at R189–T516. An S1 motif domain is found at D561 to A643.

It belongs to the RNR ribonuclease family. RNase II subfamily.

The protein localises to the cytoplasm. The enzyme catalyses Exonucleolytic cleavage in the 3'- to 5'-direction to yield nucleoside 5'-phosphates.. Functionally, involved in mRNA degradation. Hydrolyzes single-stranded polyribonucleotides processively in the 3' to 5' direction. The protein is Exoribonuclease 2 of Pectobacterium atrosepticum (strain SCRI 1043 / ATCC BAA-672) (Erwinia carotovora subsp. atroseptica).